Consider the following 293-residue polypeptide: Ribonuclease HIII (293 aa).

The RNase H type-2 domain occupies 78 to 293; that stretch reads LPLIGTDEVG…TEKAKKRLER (216 aa). A divalent metal cation contacts are provided by Asp84, Glu85, and Asp187.

Belongs to the RNase HII family. RnhC subfamily. Requires Mn(2+) as cofactor. It depends on Mg(2+) as a cofactor.

It is found in the cytoplasm. It catalyses the reaction Endonucleolytic cleavage to 5'-phosphomonoester.. Functionally, endonuclease that specifically degrades the RNA of RNA-DNA hybrids. The sequence is that of Ribonuclease HIII (rnhC) from Streptococcus pneumoniae serotype 4 (strain ATCC BAA-334 / TIGR4).